The primary structure comprises 156 residues: 6,7-dimethyl-8-ribityllumazine synthase (156 aa).

5-amino-6-(D-ribitylamino)uracil-binding positions include Phe22, 57-59 (AYE), and 81-83 (TVI). Position 86-87 (86-87 (GT)) interacts with (2S)-2-hydroxy-3-oxobutyl phosphate. The active-site Proton donor is the His89. Phe114 contributes to the 5-amino-6-(D-ribitylamino)uracil binding site. Residue Arg128 participates in (2S)-2-hydroxy-3-oxobutyl phosphate binding.

This sequence belongs to the DMRL synthase family. Forms an icosahedral capsid composed of 60 subunits, arranged as a dodecamer of pentamers.

It catalyses the reaction (2S)-2-hydroxy-3-oxobutyl phosphate + 5-amino-6-(D-ribitylamino)uracil = 6,7-dimethyl-8-(1-D-ribityl)lumazine + phosphate + 2 H2O + H(+). The protein operates within cofactor biosynthesis; riboflavin biosynthesis; riboflavin from 2-hydroxy-3-oxobutyl phosphate and 5-amino-6-(D-ribitylamino)uracil: step 1/2. Catalyzes the formation of 6,7-dimethyl-8-ribityllumazine by condensation of 5-amino-6-(D-ribitylamino)uracil with 3,4-dihydroxy-2-butanone 4-phosphate. This is the penultimate step in the biosynthesis of riboflavin. The protein is 6,7-dimethyl-8-ribityllumazine synthase of Salmonella agona (strain SL483).